The sequence spans 109 residues: Iron-sulfur cluster assembly protein CyaY (109 aa).

This sequence belongs to the frataxin family.

Involved in iron-sulfur (Fe-S) cluster assembly. May act as a regulator of Fe-S biogenesis. This chain is Iron-sulfur cluster assembly protein CyaY, found in Acidovorax ebreus (strain TPSY) (Diaphorobacter sp. (strain TPSY)).